The chain runs to 570 residues: Ferroportin (570 aa).

Residues 1-23 are Cytoplasmic-facing; the sequence is MTKARDQTHQEGCCGSLANYLTS. Residues 24 to 53 form a helical membrane-spanning segment; it reads AKFLLYLGHSLSTWGDRMWHFAVSVFLVEL. The Fe cation site is built by Asp-39 and His-43. Over 54–57 the chain is Extracellular; it reads YGNS. Residues 58-84 traverse the membrane as a helical segment; that stretch reads LLLTAVYGLVVAGSVLVLGAIIGDWVD. Residues 85–87 are Cytoplasmic-facing; sequence KNA. The chain crosses the membrane as a helical span at residues 88 to 118; it reads RLKVAQTSLVVQNVSVILCGIILMMVFLHKN. Residues 119 to 126 lie on the Extracellular side of the membrane; the sequence is ELLTMYHG. A helical membrane pass occupies residues 127 to 162; that stretch reads WVLTVCYILIITIANIANLASTATAITIQRDWIVVV. The Cytoplasmic portion of the chain corresponds to 163–164; that stretch reads AG. The chain crosses the membrane as a helical span at residues 165–195; that stretch reads ENRSRLADMNATIRRIDQLTNILAPMAVGQI. The Extracellular portion of the chain corresponds to 196 to 202; the sequence is MTFGSPV. Residues 203-229 traverse the membrane as a helical segment; the sequence is IGCGFISGWNLVSMCVEYFLLWKVYQK. Residues 230-306 are Cytoplasmic-facing; sequence TPALAVKAAL…DGWVSYYNQP (77 aa). Residues 307–333 traverse the membrane as a helical segment; sequence VFLAGMGLAFLYMTVLGFDCITTGYAY. Cys-326 is a binding site for Fe cation. Topologically, residues 334 to 338 are extracellular; the sequence is TQGLS. The chain crosses the membrane as a helical span at residues 339 to 366; sequence GSILSILMGASAITGIMGTVAFTWLRRK. Residues 367-368 are Cytoplasmic-facing; it reads CG. The helical transmembrane segment at 369–391 threads the bilayer; it reads LVRTGLFSGLAQLSCLILCVISV. Over 392 to 452 the chain is Extracellular; that stretch reads FMPGSPLDLS…EMSTKPIPIV (61 aa). The N-linked (GlcNAc...) asparagine glycan is linked to Asn-437. The chain crosses the membrane as a helical span at residues 453-482; the sequence is SVSLLFAGVIAARIGLWSFDLTVTQLLQEN. The Cytoplasmic portion of the chain corresponds to 483–487; sequence VIESE. Residues 488–512 form a helical membrane-spanning segment; the sequence is RGIINGVQNSMNYLLDLLHFIMVIL. His-506 serves as a coordination point for Fe cation. The Extracellular segment spans residues 513 to 515; sequence APN. Residues 516-541 form a helical membrane-spanning segment; sequence PEAFGLLVLISVSFVAMGHLMYFRFA. Residues 542–570 are Cytoplasmic-facing; that stretch reads QKTLGNQIFVCGPDEKEVTDENQPNTSVV.

This sequence belongs to the ferroportin (FP) (TC 2.A.100) family. SLC40A subfamily. In terms of assembly, identified in a complex with STOM. Interacts with HAMP; affinity of the peptide hormone HAMP for SLC40A1 increases by 80-fold in the presence of iron and the interaction promotes SLC40A1 ubiquitination and degradation. Part of a complex composed of SLC40A1/ferroportin, TF/transferrin and HEPH/hephaestin that transfers iron from cells to transferrin. Post-translationally, polyubiquitinated by RNF217; leading to proteasomal degradation. Under conditions of high systemic iron levels, both the hormone peptide hepcidin/HAMP and holo(iron bound)-transferrin/TF induce the ubiquitination, internalization and proteasomal degradation of SLC40A1 to control iron release from cells. High expression in spleen, liver, kidney, heart and duodenum.

The protein resides in the cell membrane. The protein localises to the basolateral cell membrane. The enzyme catalyses Fe(2+)(in) = Fe(2+)(out). Functionally, transports Fe(2+) from the inside of a cell to the outside of the cell, playing a key role for maintaining systemic iron homeostasis. Transports iron from intestinal, splenic, hepatic cells, macrophages and erythrocytes into the blood to provide iron to other tissues. Controls therefore dietary iron uptake, iron recycling by macrophages and erythrocytes, and release of iron stores in hepatocytes. When iron is in excess in serum, circulating HAMP/hepcidin levels increase resulting in a degradation of SLC40A1, thus limiting the iron efflux to plasma. The protein is Ferroportin of Mus musculus (Mouse).